The sequence spans 134 residues: Small ribosomal subunit protein uS12 (134 aa).

D89 carries the post-translational modification 3-methylthioaspartic acid. A disordered region spans residues 109 to 134 (KRNVSRSKYGAKKGKAGAAPTTGKKK). A compositionally biased stretch (basic residues) spans 111–123 (NVSRSKYGAKKGK). Over residues 124 to 134 (AGAAPTTGKKK) the composition is skewed to low complexity.

Belongs to the universal ribosomal protein uS12 family. Part of the 30S ribosomal subunit. Contacts proteins S8 and S17. May interact with IF1 in the 30S initiation complex.

In terms of biological role, with S4 and S5 plays an important role in translational accuracy. Functionally, interacts with and stabilizes bases of the 16S rRNA that are involved in tRNA selection in the A site and with the mRNA backbone. Located at the interface of the 30S and 50S subunits, it traverses the body of the 30S subunit contacting proteins on the other side and probably holding the rRNA structure together. The combined cluster of proteins S8, S12 and S17 appears to hold together the shoulder and platform of the 30S subunit. The sequence is that of Small ribosomal subunit protein uS12 from Wolinella succinogenes (strain ATCC 29543 / DSM 1740 / CCUG 13145 / JCM 31913 / LMG 7466 / NCTC 11488 / FDC 602W) (Vibrio succinogenes).